The following is a 93-amino-acid chain: Cell division topological specificity factor (93 aa).

The protein belongs to the MinE family.

Functionally, prevents the cell division inhibition by proteins MinC and MinD at internal division sites while permitting inhibition at polar sites. This ensures cell division at the proper site by restricting the formation of a division septum at the midpoint of the long axis of the cell. The polypeptide is Cell division topological specificity factor (Alkaliphilus oremlandii (strain OhILAs) (Clostridium oremlandii (strain OhILAs))).